The following is a 531-amino-acid chain: Peptide chain release factor 3 (531 aa).

A tr-type G domain is found at 10-278; the sequence is RRRRTFAIIS…SLIDWAPAPK (269 aa). GTP is bound by residues 19 to 26, 87 to 91, and 141 to 144; these read SHPDAGKT, DTPGH, and NKYD.

This sequence belongs to the TRAFAC class translation factor GTPase superfamily. Classic translation factor GTPase family. PrfC subfamily.

It is found in the cytoplasm. Functionally, increases the formation of ribosomal termination complexes and stimulates activities of RF-1 and RF-2. It binds guanine nucleotides and has strong preference for UGA stop codons. It may interact directly with the ribosome. The stimulation of RF-1 and RF-2 is significantly reduced by GTP and GDP, but not by GMP. The protein is Peptide chain release factor 3 of Neisseria meningitidis serogroup C / serotype 2a (strain ATCC 700532 / DSM 15464 / FAM18).